Reading from the N-terminus, the 248-residue chain is mRNA-decapping protein OPG122 (248 aa).

The Nudix hydrolase domain maps to 45 to 227 (HKRVSVSAIL…IAKYALDTAK (183 aa)). A Nudix box motif is present at residues 126–147 (GIPKRGENVPECLSREIKEEVN). Position 132 (E132) interacts with Mg(2+). E141 serves as the catalytic Nucleophile. E145 serves as a coordination point for Mn(2+). D167 is a Mg(2+) binding site.

This sequence belongs to the Nudix hydrolase family. It depends on Mg(2+) as a cofactor. Requires Mn(2+) as cofactor.

The protein localises to the host mitochondrion. Decapping enzyme that remove the protective 5'-cap from both host and viral mRNAs to commit transcripts for decay by the cellular exonuclease XRN1. Preferentially targets spliced mRNAs and since all viral genes are intronless, it preferentially targets host over viral transcripts. Acceleration of the turnover of cellular transcripts promotes the shutoff of host protein synthesis and therefore diminish the magnitude of antiviral response. In Bos taurus (Bovine), this protein is mRNA-decapping protein OPG122 (OPG122).